Consider the following 149-residue polypeptide: Large ribosomal subunit protein bL9 (149 aa).

This sequence belongs to the bacterial ribosomal protein bL9 family.

Its function is as follows. Binds to the 23S rRNA. In Dichelobacter nodosus (strain VCS1703A), this protein is Large ribosomal subunit protein bL9.